A 156-amino-acid chain; its full sequence is Small ribosomal subunit protein uS7 (156 aa).

It belongs to the universal ribosomal protein uS7 family. As to quaternary structure, part of the 30S ribosomal subunit. Contacts proteins S9 and S11.

One of the primary rRNA binding proteins, it binds directly to 16S rRNA where it nucleates assembly of the head domain of the 30S subunit. Is located at the subunit interface close to the decoding center, probably blocks exit of the E-site tRNA. In Gemmatimonas aurantiaca (strain DSM 14586 / JCM 11422 / NBRC 100505 / T-27), this protein is Small ribosomal subunit protein uS7.